The primary structure comprises 206 residues: MSERSGIFAGDDPFVLARAWLAEAEASEPNDPNAIALSTVDADGLPNARMVLLKEIESHGAGQGGFVFYTNYGSAKGQEIAQAGKAAFVCHWKSLHRQIRVRGLTETEDGPQADAYYASRSLKSRLGAWASDQSKPLSSRGALMADVARVTAEQGTNPKRPPFWGGVRITPLEIEFWADGAFRLHDRFQWRRGSVDDPWEVQRLNP.

FMN contacts are provided by residues 49–54, 69–70, Lys-76, and Gln-98; these read RMVLLK and YT. Lys-54 is a substrate binding site. Residues Tyr-116, Arg-120, and Ser-124 each coordinate substrate. FMN contacts are provided by residues 133–134 and Trp-177; that span reads QS. Substrate is bound at residue 183-185; the sequence is RLH. Arg-187 provides a ligand contact to FMN.

It belongs to the pyridoxamine 5'-phosphate oxidase family. As to quaternary structure, homodimer. FMN serves as cofactor.

The enzyme catalyses pyridoxamine 5'-phosphate + O2 + H2O = pyridoxal 5'-phosphate + H2O2 + NH4(+). It catalyses the reaction pyridoxine 5'-phosphate + O2 = pyridoxal 5'-phosphate + H2O2. It participates in cofactor metabolism; pyridoxal 5'-phosphate salvage; pyridoxal 5'-phosphate from pyridoxamine 5'-phosphate: step 1/1. It functions in the pathway cofactor metabolism; pyridoxal 5'-phosphate salvage; pyridoxal 5'-phosphate from pyridoxine 5'-phosphate: step 1/1. Catalyzes the oxidation of either pyridoxine 5'-phosphate (PNP) or pyridoxamine 5'-phosphate (PMP) into pyridoxal 5'-phosphate (PLP). This Jannaschia sp. (strain CCS1) protein is Pyridoxine/pyridoxamine 5'-phosphate oxidase.